The following is a 276-amino-acid chain: MTENINAGIPLGKQVGHSETYDPSHLFPVARREARKSLGLADDLPFSGPDIWNAYELSWLDSKGKPCVALGEITFPCTSENIIESKSLKLYLNSFNLTRFTSTARVKEIIREDLSRVAGAEVEVKILTPEEFTEVTISAPEGSCIDDLELEEEINAYRPTANYLSTGPEETEEELYTNLLRTNCPVTGQPDWATVIINYRGKAIDQRGLLRYIISFRQHEGFHENCVERIFMDILNRCAPARLTVYARFTRRGGLDINPYRTTHAEHFVNLRLARQ.

Position 83 to 85 (83 to 85) interacts with substrate; that stretch reads IES. 85–86 lines the NADPH pocket; the sequence is SK. The Thioimide intermediate role is filled by Cys184. The active-site Proton donor is the Asp191. 223–224 serves as a coordination point for substrate; sequence HE. An NADPH-binding site is contributed by 252 to 253; the sequence is RG.

It belongs to the GTP cyclohydrolase I family. QueF type 2 subfamily. In terms of assembly, homodimer.

It is found in the cytoplasm. It catalyses the reaction 7-aminomethyl-7-carbaguanine + 2 NADP(+) = 7-cyano-7-deazaguanine + 2 NADPH + 3 H(+). It functions in the pathway tRNA modification; tRNA-queuosine biosynthesis. Functionally, catalyzes the NADPH-dependent reduction of 7-cyano-7-deazaguanine (preQ0) to 7-aminomethyl-7-deazaguanine (preQ1). The protein is NADPH-dependent 7-cyano-7-deazaguanine reductase of Desulfotalea psychrophila (strain LSv54 / DSM 12343).